The chain runs to 485 residues: Endo-1,4-beta-xylanase C (485 aa).

A signal peptide spans 1–19; that stretch reads MKFLQIIPVLLSLTSTTLA. The GH11 domain maps to 34–234; sequence KETGNKVGTI…GNGGVSGTAD (201 aa). N-linked (GlcNAc...) asparagine glycans are attached at residues N56 and N107. E128 (nucleophile) is an active-site residue. Residue N175 is glycosylated (N-linked (GlcNAc...) asparagine). The Proton donor role is filled by E221. A disordered region spans residues 250 to 450; sequence ASPAPAGGAP…PQNASDGGNC (201 aa). Low complexity-rich tracts occupy residues 265-330 and 344-354; these read AGND…QGQH and GSDFNNWSQGG. A run of 7 repeats spans residues 275 to 280, 281 to 286, 287 to 292, 293 to 298, 299 to 304, 310 to 315, and 316 to 321. Residues 275–321 are 7 X 6 AA tandem repeats of G-Q-Q-P-P-Q; the sequence is GQQPPQGQQPPQGQQPPQGQQPPQGQQPPQGNDQQGQQPPQGQQPPQ. N349 is a glycosylation site (N-linked (GlcNAc...) asparagine). A run of 8 repeats spans residues 353–361, 362–370, 371–379, 380–388, 389–397, 399–407, 408–416, and 417–425. The tract at residues 353-425 is 8 X 9 AA tandem repeats of G-G-[SN]-P-W-G-G-N-Q; that stretch reads GGSPWGGNQG…QGGNPWGGNQ (73 aa). A compositionally biased stretch (gly residues) spans 355 to 425; it reads SPWGGNQGGS…QGGNPWGGNQ (71 aa). The span at 426–445 shows a compositional bias: low complexity; that stretch reads WGAPQNAAAPQSAAAPQNAS. N443 is a glycosylation site (N-linked (GlcNAc...) asparagine). Residues 449-484 enclose the CBM1 domain; that stretch reads NCASLWGQCGGQGYNGPSCCSEGSCKPINEYFHQCQ.

The protein belongs to the glycosyl hydrolase 11 (cellulase G) family.

The protein localises to the secreted. The catalysed reaction is Endohydrolysis of (1-&gt;4)-beta-D-xylosidic linkages in xylans.. Its pathway is glycan degradation; xylan degradation. Endo-1,4-beta-xylanase involved in the hydrolysis of xylan, a major structural heterogeneous polysaccharide found in plant biomass representing the second most abundant polysaccharide in the biosphere, after cellulose. The chain is Endo-1,4-beta-xylanase C (xynC) from Neocallimastix patriciarum (Rumen fungus).